The following is a 289-amino-acid chain: Oxaloacetate decarboxylase (289 aa).

Residue Ser47 coordinates substrate. Asp85 provides a ligand contact to Mg(2+). 2 residues coordinate substrate: Arg156 and His232.

It belongs to the isocitrate lyase/PEP mutase superfamily. Oxaloacetate decarboxylase family. In terms of assembly, homotetramer; dimer of dimers. Mg(2+) serves as cofactor.

It catalyses the reaction oxaloacetate + H(+) = pyruvate + CO2. Functionally, catalyzes the decarboxylation of oxaloacetate into pyruvate. Seems to play a role in maintaining cellular concentrations of bicarbonate and pyruvate. This is Oxaloacetate decarboxylase from Rhodopseudomonas palustris (strain BisB5).